A 907-amino-acid chain; its full sequence is Probable ubiquitin-conjugating enzyme E2 24 (907 aa).

Disordered stretches follow at residues 1-23 (MEMSLTDSDWDSSSDSGSSEHEE) and 485-509 (SSTVSSEGSVQDLSQKISQSDEASS). Residues 495-509 (QDLSQKISQSDEASS) are compositionally biased toward polar residues. In terms of domain architecture, UBC core spans 662–822 (SWVKKVQQEW…AFLITCKSMI (161 aa)). The active-site Glycyl thioester intermediate is the Cys748.

This sequence belongs to the ubiquitin-conjugating enzyme family. As to quaternary structure, interacts with PHO1. Interacts with NLA. Expressed in the vascular tissues of cotyledons, leaves, roots, sepals, filaments, anthers and junctions between the inflorescence stems and siliques.

It is found in the golgi apparatus membrane. Its subcellular location is the endoplasmic reticulum membrane. It carries out the reaction S-ubiquitinyl-[E1 ubiquitin-activating enzyme]-L-cysteine + [E2 ubiquitin-conjugating enzyme]-L-cysteine = [E1 ubiquitin-activating enzyme]-L-cysteine + S-ubiquitinyl-[E2 ubiquitin-conjugating enzyme]-L-cysteine.. Its pathway is protein modification; protein ubiquitination. E2 ubiquitin-protein ligase that mediates E1-dependent protein ubiquitination. Mediates PHO1 degradation through multivesicular body-mediated vacuolar proteolysis in response to inorganic phosphate (Pi) availability. Negatively regulates the protein abundance of PHF1 and PHT1s under Pi-sufficient conditions by facilitating the degradation of PHT1 proteins at the endomembrane. Functions cooperatively with NLA to regulate the abundance of the inorganic phosphate (Pi) transporters PHT1-1, PHT1-2 and PHT1-3 in different subcellular compartments. Regulates Pi homeostasis by mediating, cooperatively with NLA, polyubiquitination of PHT1-4 and its targeting for degradation. The sequence is that of Probable ubiquitin-conjugating enzyme E2 24 from Arabidopsis thaliana (Mouse-ear cress).